A 334-amino-acid polypeptide reads, in one-letter code: Methionine adenosyltransferase 2 subunit beta (334 aa).

Residues 37-40 (TGLL), 60-62 (FRR), 71-72 (NL), Cys93, Arg97, Tyr159, and Leu185 each bind NADP(+). Thr309 is subject to Phosphothreonine. A required for interaction with MAT2A region spans residues 319–334 (LWPFLIDKRWRQTVFH).

This sequence belongs to the dTDP-4-dehydrorhamnose reductase family. MAT2B subfamily. In terms of assembly, heterotrimer; composed of a catalytic MAT2A homodimer that binds one regulatory MAT2B chain. Heterohexamer; composed of a central, catalytic MAT2A homotetramer flanked on either side by a regulatory MAT2B chain. NADP binding increases the affinity for MAT2A.

Its pathway is amino-acid biosynthesis; S-adenosyl-L-methionine biosynthesis; S-adenosyl-L-methionine from L-methionine: step 1/1. Its function is as follows. Regulatory subunit of S-adenosylmethionine synthetase 2, an enzyme that catalyzes the formation of S-adenosylmethionine from methionine and ATP. Regulates MAT2A catalytic activity by changing its kinetic properties, increasing its affinity for L-methionine. Can bind NADP (in vitro). The protein is Methionine adenosyltransferase 2 subunit beta (Mat2b) of Rattus norvegicus (Rat).